A 95-amino-acid chain; its full sequence is uncharacterized protein (95 aa).

This is an uncharacterized protein from Archaeoglobus fulgidus (strain ATCC 49558 / DSM 4304 / JCM 9628 / NBRC 100126 / VC-16).